A 367-amino-acid chain; its full sequence is Glutamate 5-kinase (367 aa).

ATP is bound at residue Lys17. Substrate is bound by residues Ser57, Asp144, and Asn156. ATP is bound by residues 176-177 and 217-223; these read SD and TGGMTSK. Residues 279-357 form the PUA domain; that stretch reads AGALTLDEGA…SELPGELRRP (79 aa).

This sequence belongs to the glutamate 5-kinase family.

It is found in the cytoplasm. The catalysed reaction is L-glutamate + ATP = L-glutamyl 5-phosphate + ADP. The protein operates within amino-acid biosynthesis; L-proline biosynthesis; L-glutamate 5-semialdehyde from L-glutamate: step 1/2. In terms of biological role, catalyzes the transfer of a phosphate group to glutamate to form L-glutamate 5-phosphate. In Mycolicibacterium paratuberculosis (strain ATCC BAA-968 / K-10) (Mycobacterium paratuberculosis), this protein is Glutamate 5-kinase.